The primary structure comprises 147 residues: Fibromodulin (147 aa).

6 LRR repeats span residues 1–15 (LDHN…PLPR), 16–37 (SLRE…ALEG), 40–61 (NLTA…MRGL), 63–84 (SLIL…LPSA), 85–105 (LEQL…YFRG), and 108–128 (KLLY…ASNT). Residue asparagine 5 is glycosylated (N-linked (GlcNAc...) (keratan sulfate) asparagine). N-linked (GlcNAc...) (keratan sulfate) asparagine glycosylation is present at asparagine 40. Asparagine 130 carries N-linked (GlcNAc...) (keratan sulfate) asparagine glycosylation. One copy of the LRR 7 repeat lies at 133–147 (SLLELDLSYNQLQKI).

The protein belongs to the small leucine-rich proteoglycan (SLRP) family. SLRP class II subfamily. As to quaternary structure, binds to type I and type II collagen. In terms of processing, binds keratan sulfate chains.

Its subcellular location is the secreted. It localises to the extracellular space. The protein resides in the extracellular matrix. Affects the rate of fibrils formation. May have a primary role in collagen fibrillogenesis. The polypeptide is Fibromodulin (FMOD) (Sus scrofa (Pig)).